The primary structure comprises 387 residues: S-adenosylmethionine synthase (387 aa).

H19 provides a ligand contact to ATP. D21 is a Mg(2+) binding site. Position 47 (E47) interacts with K(+). Q103 is an L-methionine binding site. The tract at residues 103 to 113 is flexible loop; sequence QSPDIAQGVEL. Residues 167-169, 233-234, D242, 248-249, A265, and K269 each bind ATP; these read DMK, RF, and RK. D242 contacts L-methionine. L-methionine is bound at residue K273.

The protein belongs to the AdoMet synthase family. In terms of assembly, homotetramer; dimer of dimers. It depends on Mg(2+) as a cofactor. K(+) is required as a cofactor.

It localises to the cytoplasm. It carries out the reaction L-methionine + ATP + H2O = S-adenosyl-L-methionine + phosphate + diphosphate. Its pathway is amino-acid biosynthesis; S-adenosyl-L-methionine biosynthesis; S-adenosyl-L-methionine from L-methionine: step 1/1. Functionally, catalyzes the formation of S-adenosylmethionine (AdoMet) from methionine and ATP. The overall synthetic reaction is composed of two sequential steps, AdoMet formation and the subsequent tripolyphosphate hydrolysis which occurs prior to release of AdoMet from the enzyme. This Mycoplasma mycoides subsp. mycoides SC (strain CCUG 32753 / NCTC 10114 / PG1) protein is S-adenosylmethionine synthase.